Consider the following 437-residue polypeptide: Aspartokinase (437 aa).

It belongs to the aspartokinase family.

The enzyme catalyses L-aspartate + ATP = 4-phospho-L-aspartate + ADP. It participates in amino-acid biosynthesis; L-lysine biosynthesis via DAP pathway; (S)-tetrahydrodipicolinate from L-aspartate: step 1/4. The protein operates within amino-acid biosynthesis; L-methionine biosynthesis via de novo pathway; L-homoserine from L-aspartate: step 1/3. It functions in the pathway amino-acid biosynthesis; L-threonine biosynthesis; L-threonine from L-aspartate: step 1/5. This chain is Aspartokinase (lysC), found in Chlamydia muridarum (strain MoPn / Nigg).